Consider the following 398-residue polypeptide: Elongation factor Tu (398 aa).

Positions 10-207 constitute a tr-type G domain; that stretch reads KPHVNIGTIG…TVDEYIPEPE (198 aa). A G1 region spans residues 19 to 26; the sequence is GHVDHGKT. Residue 19-26 coordinates GTP; the sequence is GHVDHGKT. Thr26 is a binding site for Mg(2+). Residues 63–67 form a G2 region; that stretch reads GITIN. The segment at 84 to 87 is G3; sequence DAPG. GTP contacts are provided by residues 84–88 and 139–142; these read DAPGH and NKVD. A G4 region spans residues 139-142; sequence NKVD. The segment at 177 to 179 is G5; the sequence is SAL.

The protein belongs to the TRAFAC class translation factor GTPase superfamily. Classic translation factor GTPase family. EF-Tu/EF-1A subfamily. Monomer.

It localises to the cytoplasm. It catalyses the reaction GTP + H2O = GDP + phosphate + H(+). In terms of biological role, GTP hydrolase that promotes the GTP-dependent binding of aminoacyl-tRNA to the A-site of ribosomes during protein biosynthesis. This is Elongation factor Tu from Streptococcus agalactiae serotype V (strain ATCC BAA-611 / 2603 V/R).